A 113-amino-acid polypeptide reads, in one-letter code: Protein ORF3 (113 aa).

Hydrophobic stretches follow at residues methionine 1–cysteine 21 and alanine 32–leucine 52. An interaction with host HPX region spans residues alanine 27–proline 67. An interaction with the capsid protein region spans residues valine 47–phenylalanine 71. Position 70 is a phosphoserine; by host (serine 70). Residues phenylalanine 71–arginine 113 form a homodimerization, and interaction with host AMBP/bikunin region. The disordered stretch occupies residues leucine 90–arginine 113. Residues serine 94–valine 103 form an interaction with host SRC, HCK, FYN, PIK3R3 and GRB2 region. Residues proline 95–proline 98 carry the PTAP/PSAP motif motif.

This sequence belongs to the hepevirus ORF3 protein family. As to quaternary structure, forms homooligomers. Interacts with host SRC, HCK, FYN, PIK3R3 and GRB2 (via SH3 domain); binding does not activate the kinases. Interacts with host AMBP/bikunin and AMBP/alpha-1-microglobulin peptides. Interacts with host HPX/hemopexin. Interacts (when phosphorylated) with capsid protein ORF2. Interacts with host TSG101; this interaction plays a role in viral release from the host cell. Interacts with host SIRPA; this interaction down-regulates the phosphorylation of host IRF3. Palmitoylated in the N-terminus.

The protein localises to the host endoplasmic reticulum membrane. It localises to the host cytoplasm. Its subcellular location is the host cytoskeleton. The protein resides in the virion. It is found in the host cell membrane. Functionally, small multifunctional phosphoprotein involved in virion morphogenesis, egress and counteracting host innate immunity. Plays critical roles in the final steps of viral release by interacting with host TSG101, a member of the vacuolar protein-sorting pathway and using other cellular host proteins involved in vesicle formation pathway. Also acts as a viroporin and forms ion conductive pores allowing viral particle release. Impairs the generation of type I interferon by down-regulating host TLR3 and TLR7 as well as their downstream signaling pathways. Down-regulates the phosphorylation of host IRF3 via the interaction with host SIRP-alpha, thereby inhibiting IFN-I expression. Interacts with host microtubules. This chain is Protein ORF3, found in Hepatitis E virus genotype 3 (isolate Human/United States/US2) (HEV-3).